The primary structure comprises 67 residues: Small ribosomal subunit protein eS17 (67 aa).

The protein belongs to the eukaryotic ribosomal protein eS17 family.

The chain is Small ribosomal subunit protein eS17 from Thermococcus gammatolerans (strain DSM 15229 / JCM 11827 / EJ3).